The chain runs to 136 residues: MYSWYFPKDSPSTGLGHRHDWEHVIVWIDNPEVPEPKILGVTPSAHSGYSSQVPPDADKVDGSSVKVKYLSKWPINHALESTGEGGDFQDLIMWTQMTDAAREGLSKTGWGKANVPMVDGNFEAKLGKAWPFGEKK.

A Conserved undecapeptide motif I motif is present at residues 1–9 (MYSWYFPKD). The short motif at 16 to 22 (GHRHDWE) is the Hepta-peptide GHRHDWE motif II element.

Belongs to the Necrosis inducing protein (NPP1) family.

The protein resides in the secreted. Secreted effector that contributes moderately to virulence during infection by P.capsici. Causes only small yellow areas at 3 days after inoculation of host C.annuum leaves; these areas expand somewhat and became necrotic at 7 days after inoculation. Leads only to chlorotic areas, without necrosis at 7 days after non-host N.benthamiana leaves infection. This Phytophthora capsici protein is NLP effector protein 13.